A 283-amino-acid chain; its full sequence is Polyamine aminopropyltransferase (283 aa).

A PABS domain is found at 2-238; that stretch reads ELWYTEEWTE…GHWLFGFASK (237 aa). Position 31 (Q31) interacts with S-methyl-5'-thioadenosine. H62 and D86 together coordinate spermidine. Residues E106 and 137–138 each bind S-methyl-5'-thioadenosine; that span reads DG. The active-site Proton acceptor is D156. 156-159 contributes to the spermidine binding site; that stretch reads DSTD. P163 is a binding site for S-methyl-5'-thioadenosine.

The protein belongs to the spermidine/spermine synthase family. Homodimer or homotetramer.

It is found in the cytoplasm. It carries out the reaction S-adenosyl 3-(methylsulfanyl)propylamine + putrescine = S-methyl-5'-thioadenosine + spermidine + H(+). The protein operates within amine and polyamine biosynthesis; spermidine biosynthesis; spermidine from putrescine: step 1/1. In terms of biological role, catalyzes the irreversible transfer of a propylamine group from the amino donor S-adenosylmethioninamine (decarboxy-AdoMet) to putrescine (1,4-diaminobutane) to yield spermidine. In Clostridioides difficile (strain 630) (Peptoclostridium difficile), this protein is Polyamine aminopropyltransferase.